A 392-amino-acid chain; its full sequence is Nucleolysin TIAR (392 aa).

RRM domains are found at residues 9 to 102 and 114 to 192; these read RTLY…WATT and FHVF…WATR. Lys-139 is subject to N6-acetyllysine. Ser-218 carries the post-translational modification Phosphoserine. Positions 222–294 constitute an RRM 3 domain; sequence CTVYCGGIAS…HVVKCYWGKE (73 aa). The tract at residues 363-392 is disordered; the sequence is GAQPPQGQAPPPVIPPPNQAGYGMASFPTQ. Residues 369 to 380 show a composition bias toward pro residues; it reads GQAPPPVIPPPN.

Interacts with FASTK. Post-translationally, phosphorylated by MAPK14 following DNA damage, releasing TIAR from GADD45A mRNA. Expressed both in primordial germ cells (PGCs) and in neighboring somatic cells.

The protein resides in the nucleus. It localises to the cytoplasm. Its subcellular location is the stress granule. It is found in the cytolytic granule. In terms of biological role, RNA-binding protein involved in alternative pre-RNA splicing and in cytoplasmic stress granules formation. Shows a preference for uridine-rich RNAs. Activates splicing of alternative exons with weak 5' splice sites followed by a U-rich stretch on its own pre-mRNA and on TIA1 mRNA. Promotes the inclusion of TIA1 exon 5 to give rise to the long isoform (isoform a) of TIA1. Acts downstream of the stress-induced phosphorylation of EIF2S1/EIF2A to promote the recruitment of untranslated mRNAs to cytoplasmic stress granules (SG). Possesses nucleolytic activity against cytotoxic lymphocyte target cells. May be involved in apoptosis. In Mus musculus (Mouse), this protein is Nucleolysin TIAR (Tial1).